Consider the following 154-residue polypeptide: Stigma-specific STIG1-like protein 3 (154 aa).

An N-terminal signal peptide occupies residues 1-23; sequence MGHRNTVLTILLTISIAIMVLIA.

This sequence belongs to the STIG1 family.

This Arabidopsis thaliana (Mouse-ear cress) protein is Stigma-specific STIG1-like protein 3.